A 423-amino-acid polypeptide reads, in one-letter code: uncharacterized protein (423 aa).

In terms of domain architecture, BON spans 75-145; it reads LHVVVTQPIA…PIVNNIKVAG (71 aa).

The protein belongs to the bacterial secretin family.

In terms of biological role, involved in the secretion of an unknown compound. This is an uncharacterized protein from Sinorhizobium fredii (strain NBRC 101917 / NGR234).